The primary structure comprises 440 residues: Long-chain alkane monooxygenase (440 aa).

Residues D58, 137 to 138 (SH), Y158, and 227 to 230 (AGMS) contribute to the FMN site.

Belongs to the NtaA/SnaA/DszA monooxygenase family. Homodimer.

Its subcellular location is the secreted. It carries out the reaction a long-chain alkane + FMNH2 + O2 = a long chain fatty alcohol + FMN + H2O + H(+). In terms of biological role, involved in the degradation of long-chain alkanes. Converts alkanes ranging from C(15) to C(36) into their corresponding primary alcohols. The chain is Long-chain alkane monooxygenase from Geobacillus thermodenitrificans (strain NG80-2).